Reading from the N-terminus, the 152-residue chain is MKKNIQQTVTELVSPVVESLNYELVDIEYVKEGANWYLRVYIDKPGGISIDDCQAVSEQVSDLLDKDDPIDQSYFLEVSSPGLDRPLKTEKDFAKYKGELVEVKVFQPIDGKKIFEGELVGLKDNIIVINQDGHNVQFERDEVAIVKRVIKF.

Belongs to the RimP family.

It localises to the cytoplasm. Its function is as follows. Required for maturation of 30S ribosomal subunits. The chain is Ribosome maturation factor RimP from Ruminiclostridium cellulolyticum (strain ATCC 35319 / DSM 5812 / JCM 6584 / H10) (Clostridium cellulolyticum).